A 446-amino-acid polypeptide reads, in one-letter code: Tubulin beta-2 chain (446 aa).

Residues Gln11, Glu69, Ser138, Gly142, Thr143, Gly144, Asn204, and Asn226 each contribute to the GTP site. Glu69 contributes to the Mg(2+) binding site. The tract at residues 424 to 446 (QYQEATADEEGEFDEDEEGGGDE) is disordered. A compositionally biased stretch (acidic residues) spans 429-446 (TADEEGEFDEDEEGGGDE).

Belongs to the tubulin family. In terms of assembly, dimer of alpha and beta chains. A typical microtubule is a hollow water-filled tube with an outer diameter of 25 nm and an inner diameter of 15 nM. Alpha-beta heterodimers associate head-to-tail to form protofilaments running lengthwise along the microtubule wall with the beta-tubulin subunit facing the microtubule plus end conferring a structural polarity. Microtubules usually have 13 protofilaments but different protofilament numbers can be found in some organisms and specialized cells. It depends on Mg(2+) as a cofactor.

The protein localises to the cytoplasm. Its subcellular location is the cytoskeleton. Tubulin is the major constituent of microtubules, a cylinder consisting of laterally associated linear protofilaments composed of alpha- and beta-tubulin heterodimers. Microtubules grow by the addition of GTP-tubulin dimers to the microtubule end, where a stabilizing cap forms. Below the cap, tubulin dimers are in GDP-bound state, owing to GTPase activity of alpha-tubulin. The sequence is that of Tubulin beta-2 chain (betaTub85D) from Drosophila erecta (Fruit fly).